Here is a 281-residue protein sequence, read N- to C-terminus: NADPH-dependent 7-cyano-7-deazaguanine reductase (281 aa).

Residue 88–90 coordinates substrate; that stretch reads IES. 90 to 91 serves as a coordination point for NADPH; it reads SK. The active-site Thioimide intermediate is C189. The active-site Proton donor is D196. 228-229 lines the substrate pocket; that stretch reads HE. Residue 257–258 participates in NADPH binding; it reads RG.

Belongs to the GTP cyclohydrolase I family. QueF type 2 subfamily. In terms of assembly, homodimer.

The protein resides in the cytoplasm. It carries out the reaction 7-aminomethyl-7-carbaguanine + 2 NADP(+) = 7-cyano-7-deazaguanine + 2 NADPH + 3 H(+). The protein operates within tRNA modification; tRNA-queuosine biosynthesis. Its function is as follows. Catalyzes the NADPH-dependent reduction of 7-cyano-7-deazaguanine (preQ0) to 7-aminomethyl-7-deazaguanine (preQ1). In Yersinia enterocolitica serotype O:8 / biotype 1B (strain NCTC 13174 / 8081), this protein is NADPH-dependent 7-cyano-7-deazaguanine reductase.